The sequence spans 127 residues: Thioredoxin domain-containing protein 8 (127 aa).

The Thioredoxin domain occupies 2–127 (VQKIKSMREF…KLEEKIQELM (126 aa)). A disulfide bond links Cys-32 and Cys-35.

This sequence belongs to the thioredoxin family. As to expression, testis-specific. Expressed in spermatozoa, sperm tail, elongated and round spermatids.

Its subcellular location is the cytoplasm. The protein resides in the golgi apparatus. May be required for post-translational modifications of proteins required for acrosomal biogenesis. May act by reducing disulfide bonds within the sperm. This is Thioredoxin domain-containing protein 8 (Txndc8) from Rattus norvegicus (Rat).